Consider the following 325-residue polypeptide: Release factor glutamine methyltransferase (325 aa).

Residues 141-145 (GTGSG), Asp-164, Trp-193, and Asn-207 contribute to the S-adenosyl-L-methionine site. 207 to 210 (NPPY) lines the substrate pocket. The segment at 306-325 (LPPIHIDAKPSAPGNGPTKA) is disordered.

Belongs to the protein N5-glutamine methyltransferase family. PrmC subfamily.

It carries out the reaction L-glutaminyl-[peptide chain release factor] + S-adenosyl-L-methionine = N(5)-methyl-L-glutaminyl-[peptide chain release factor] + S-adenosyl-L-homocysteine + H(+). Functionally, methylates the class 1 translation termination release factors RF1/PrfA and RF2/PrfB on the glutamine residue of the universally conserved GGQ motif. The protein is Release factor glutamine methyltransferase of Rhodospirillum rubrum (strain ATCC 11170 / ATH 1.1.1 / DSM 467 / LMG 4362 / NCIMB 8255 / S1).